The following is a 605-amino-acid chain: Probable Xaa-Pro aminopeptidase P (605 aa).

Mn(2+) contacts are provided by aspartate 402, aspartate 413, glutamate 511, and glutamate 525.

It belongs to the peptidase M24B family. Requires Mn(2+) as cofactor.

The enzyme catalyses Release of any N-terminal amino acid, including proline, that is linked to proline, even from a dipeptide or tripeptide.. In terms of biological role, catalyzes the removal of a penultimate prolyl residue from the N-termini of peptides. In Leptosphaeria maculans (strain JN3 / isolate v23.1.3 / race Av1-4-5-6-7-8) (Blackleg fungus), this protein is Probable Xaa-Pro aminopeptidase P (AMPP).